The chain runs to 393 residues: Trehalose import ATP-binding protein SugC (393 aa).

In terms of domain architecture, ABC transporter spans 4 to 235 (IVLDHVNKSY…PANLFVAGFI (232 aa)). An ATP-binding site is contributed by 37–44 (GPSGCGKT). Residues 135–139 (LSGGQ) carry the Helical C-loop; LSGGQ motif motif.

It belongs to the ABC transporter superfamily. As to quaternary structure, monomer. Homodimerizes in the presence of ATP. The complex is composed of two ATP-binding proteins (SugC), two transmembrane proteins (SugA and SugB) and a solute-binding protein (LpqY).

The protein resides in the cell inner membrane. It catalyses the reaction alpha,alpha-trehalose(out) + ATP + H2O = alpha,alpha-trehalose(in) + ADP + phosphate + H(+). Its function is as follows. Part of the ABC transporter complex LpqY-SugA-SugB-SugC, which is highly specific for uptake of trehalose. Involved in the recycling of extracellular trehalose released from trehalose-containing molecules synthesized by M.tuberculosis. Trehalose uptake is essential for virulence. Responsible for energy coupling to the transport system. The polypeptide is Trehalose import ATP-binding protein SugC (sugC) (Mycobacterium tuberculosis (strain CDC 1551 / Oshkosh)).